Here is a 215-residue protein sequence, read N- to C-terminus: Protein Syd (215 aa).

Belongs to the Syd family.

The protein resides in the cell inner membrane. Functionally, interacts with the SecY protein in vivo. May bind preferentially to an uncomplexed state of SecY, thus functioning either as a chelating agent for excess SecY in the cell or as a regulatory factor that negatively controls the translocase function. This is Protein Syd from Shewanella amazonensis (strain ATCC BAA-1098 / SB2B).